The following is a 930-amino-acid chain: Isoleucine--tRNA ligase (930 aa).

The 'HIGH' region signature appears at Pro57–His67. Glu573 is an L-isoleucyl-5'-AMP binding site. The 'KMSKS' region signature appears at Lys614–Ser618. Lys617 provides a ligand contact to ATP. Cys902, Cys905, Cys918, and Cys921 together coordinate Zn(2+).

The protein belongs to the class-I aminoacyl-tRNA synthetase family. IleS type 1 subfamily. Monomer. Zn(2+) is required as a cofactor.

It is found in the cytoplasm. The catalysed reaction is tRNA(Ile) + L-isoleucine + ATP = L-isoleucyl-tRNA(Ile) + AMP + diphosphate. Catalyzes the attachment of isoleucine to tRNA(Ile). As IleRS can inadvertently accommodate and process structurally similar amino acids such as valine, to avoid such errors it has two additional distinct tRNA(Ile)-dependent editing activities. One activity is designated as 'pretransfer' editing and involves the hydrolysis of activated Val-AMP. The other activity is designated 'posttransfer' editing and involves deacylation of mischarged Val-tRNA(Ile). The sequence is that of Isoleucine--tRNA ligase from Helicobacter hepaticus (strain ATCC 51449 / 3B1).